A 485-amino-acid chain; its full sequence is uncharacterized protein (485 aa).

It localises to the virion. This is an uncharacterized protein from Acanthamoeba polyphaga mimivirus (APMV).